The chain runs to 482 residues: Auxin transporter-like protein 2 (482 aa).

Residues 1-58 (MVPAGDQAEEAIVADAGKEEAEVRAAMGVEQDGKFSMTSLLWHGGSVWDAWFSCASNQ) are Cytoplasmic-facing. Residues 59–76 (VAQVLLTLPYSFSQLGML) form a helical membrane-spanning segment. At 77 to 78 (SG) the chain is on the extracellular side. Residues 79 to 99 (LLLQVFYGLMGSWTAYLISVL) traverse the membrane as a helical segment. The Cytoplasmic segment spans residues 100 to 134 (YVEYRARKEKEGVSFKNHVIQWFEVLDGLLGPYWK). A helical transmembrane segment spans residues 135 to 155 (AAGLAFNCTFLLFGSVIQLIA). Topologically, residues 156 to 171 (CASNIYYINDRLDKRT) are extracellular. The helical transmembrane segment at 172-192 (WTYIFGACCSTTVFIPSFHNY) threads the bilayer. A topological domain (cytoplasmic) is located at residue arginine 193. A helical membrane pass occupies residues 194-214 (IWSFLGLGMTTYTAWYLAIAA). Residues 215-231 (AVHGQVDGVTHSGPSKM) lie on the Extracellular side of the membrane. A helical membrane pass occupies residues 232-252 (VLYFTGATNILYTFGGHAVTV). At 253–265 (EIMHAMWKPQKFK) the chain is on the cytoplasmic side. A helical transmembrane segment spans residues 266–286 (YIYLVATLYVFTLTLPSASAM). Residues 287 to 313 (YWAFGDALLTHSNAFSLLPRSGWRDAA) lie on the Extracellular side of the membrane. A helical transmembrane segment spans residues 314-334 (VILMLIHQFITFGFACTPLYF). Over 335-355 (VWEKAIGMHGTRSVLTRALAR) the chain is Cytoplasmic. The chain crosses the membrane as a helical span at residues 356–376 (LPIVVPIWFLAIIFPFFGPIN). Residue serine 377 is a topological domain, extracellular. Residues 378 to 398 (AVGALLVSFTVYIIPSLSHIL) traverse the membrane as a helical segment. Over 399 to 423 (TYRSASARLNAAEKPPPFLPSWSGM) the chain is Cytoplasmic. Residues 424–444 (FVVNVFVVAWVLVVGFGLGGW) traverse the membrane as a helical segment. Over 445-482 (ASVTNFIKQIDTFGLFAKCYQCPPRAHAGAPLPAPPRH) the chain is Extracellular.

Belongs to the amino acid/polyamine transporter 2 family. Amino acid/auxin permease (AAAP) (TC 2.A.18.1) subfamily.

The protein resides in the cell membrane. Functionally, carrier protein involved in proton-driven auxin influx. May mediate the formation of auxin gradient from developing leaves (site of auxin biosynthesis) to tips. In Oryza sativa subsp. japonica (Rice), this protein is Auxin transporter-like protein 2.